We begin with the raw amino-acid sequence, 93 residues long: Cell division protein CrgA (93 aa).

The next 2 membrane-spanning stretches (helical) occupy residues 31 to 51 (VWFVTLFVGLMLIGLVWLMVF) and 70 to 90 (LGPWNYAIAFAFMITGLLLTM).

This sequence belongs to the CrgA family.

The protein resides in the cell membrane. Its function is as follows. Involved in cell division. This Mycobacterium leprae (strain Br4923) protein is Cell division protein CrgA.